Reading from the N-terminus, the 296-residue chain is Formylmethanofuran--tetrahydromethanopterin formyltransferase (296 aa).

It belongs to the FTR family. Homotetramer composed of two dimers. Dimerization is sufficient for enzyme activity, but tetramerization is required for high thermostability.

Its subcellular location is the cytoplasm. The catalysed reaction is N-formylmethanofuran + 5,6,7,8-tetrahydromethanopterin + H(+) = N(5)-formyl-5,6,7,8-tetrahydromethanopterin + methanofuran. Its pathway is one-carbon metabolism; methanogenesis from CO(2); 5,10-methenyl-5,6,7,8-tetrahydromethanopterin from CO(2): step 2/3. Its activity is regulated as follows. Requires high salt concentrations for activity and thermostability; 1.5-1.8 M KH(2)PO(4) stimulates activity while stabilizing the enzyme. Catalyzes the reversible transfer of a formyl group from formylmethanofuran (formyl-MFR) to tetrahydromethanopterin (H(4)MPT) to produce 5-formyl tetrahydromethanopterin (5-formyl-H(4)MPT) and methanofuran (MFR). Acts via a ternary-complex mechanism. Uses N-furfurylformamide much less efficiently, does not use N-methylformamide or formamide. Protein overexpressed in E.coli has very similar properties to enzyme purified from M.kandleri. This chain is Formylmethanofuran--tetrahydromethanopterin formyltransferase, found in Methanopyrus kandleri (strain AV19 / DSM 6324 / JCM 9639 / NBRC 100938).